The sequence spans 379 residues: 3-dehydroquinate synthase (379 aa).

Belongs to the archaeal-type DHQ synthase family.

The catalysed reaction is 2-amino-2,3,7-trideoxy-D-lyxo-hept-6-ulosonate + NAD(+) + H2O = 3-dehydroquinate + NH4(+) + NADH + H(+). Its function is as follows. Catalyzes the oxidative deamination and cyclization of 2-amino-3,7-dideoxy-D-threo-hept-6-ulosonic acid (ADH) to yield 3-dehydroquinate (DHQ), which is fed into the canonical shikimic pathway of aromatic amino acid biosynthesis. This is 3-dehydroquinate synthase from Methanococcoides burtonii (strain DSM 6242 / NBRC 107633 / OCM 468 / ACE-M).